Consider the following 257-residue polypeptide: Small ribosomal subunit protein uS2 (257 aa).

This sequence belongs to the universal ribosomal protein uS2 family.

The chain is Small ribosomal subunit protein uS2 from Bartonella quintana (strain Toulouse) (Rochalimaea quintana).